We begin with the raw amino-acid sequence, 23 residues long: U1-ctenitoxin-Co1a (23 aa).

Cys10 and Cys20 are oxidised to a cystine.

As to expression, expressed by the venom gland.

The protein localises to the secreted. In terms of biological role, insecticidal neurotoxin that reversibly inhibits the N-methyl-D-aspartate (NMDA)-subtype of ionotropic glutamate receptor (GRIN) and inhibits inactivation of insect sodium channels (Nav). In vivo, is highly toxic to insects. This chain is U1-ctenitoxin-Co1a, found in Ctenus ornatus (Brazilian spider).